A 634-amino-acid chain; its full sequence is Growth hormone receptor (634 aa).

Residues 1-18 (MDLWQLLLTLAVAGSSDA) form the signal peptide. The Extracellular portion of the chain corresponds to 19 to 260 (FSGSEATPAF…NPSACEEDFQ (242 aa)). Asn46 carries an N-linked (GlcNAc...) asparagine glycan. The cysteines at positions 56 and 66 are disulfide-linked. Residue Asn73 is glycosylated (N-linked (GlcNAc...) asparagine). Cys97 and Cys108 are oxidised to a cystine. Residue Asn111 is glycosylated (N-linked (GlcNAc...) asparagine). A disulfide bridge links Cys122 with Cys136. A Fibronectin type-III domain is found at 147–250 (PPVGLNWTLL…EVLLITFPQM (104 aa)). 3 N-linked (GlcNAc...) asparagine glycosylation sites follow: Asn152, Asn157, and Asn196. A WSXWS motif motif is present at residues 236–240 (YGKFS). A helical transmembrane segment spans residues 261–284 (FPWFLIIMFGILGLAVTLFLLIFS). Topologically, residues 285 to 634 (KQQRIKMLIL…STDQLNKIMP (350 aa)) are cytoplasmic. The tract at residues 290 to 375 (KMLILPPVPV…HEKSLNIFGA (86 aa)) is required for JAK2 binding. Positions 293–301 (ILPPVPVPK) match the Box 1 motif motif. The short motif at 336-345 (DSWVEFIELD) is the UbE motif element. Ser337 is subject to Phosphoserine. Phosphotyrosine is present on residues Tyr483 and Tyr591.

This sequence belongs to the type I cytokine receptor family. Type 1 subfamily. On growth hormone (GH) binding, forms homodimers and binds JAK2 via a box 1-containing domain. Post-translationally, the soluble form (GHBP) is produced by phorbol ester-promoted proteolytic cleavage at the cell surface (shedding) by ADAM17/TACE. Shedding is inhibited by growth hormone (GH) binding to the receptor probably due to a conformational change in GHR rendering the receptor inaccessible to ADAM17. In terms of processing, on GH binding, phosphorylated on tyrosine residues in the cytoplasmic domain by JAK2. Ubiquitinated by the ECS(SOCS2) complex following ligand-binding and phosphorylation by JAK2, leading to its degradation by the proteasome. Regulation by the ECS(SOCS2) complex acts as a negative feedback loop of growth hormone receptor signaling. Ubiquitination is not sufficient for GHR internalization.

It is found in the cell membrane. Its subcellular location is the secreted. Receptor for pituitary gland growth hormone (GH1) involved in regulating postnatal body growth. On ligand binding, couples to the JAK2/STAT5 pathway. Functionally, the soluble form (GHBP) acts as a reservoir of growth hormone in plasma and may be a modulator/inhibitor of GH signaling. This chain is Growth hormone receptor (GHR), found in Bos indicus (Zebu).